Consider the following 369-residue polypeptide: Protein disulfide-isomerase erp38 (369 aa).

The first 18 residues, 1 to 18 (MVLLKSLVVASLAAAVAA), serve as a signal peptide directing secretion. 2 consecutive Thioredoxin domains span residues 19–130 (KSAV…EKTG) and 131–251 (VKAR…EKAG). Active-site nucleophile residues include Cys-50, Cys-53, Cys-170, and Cys-173. 2 cysteine pairs are disulfide-bonded: Cys-50–Cys-53 and Cys-170–Cys-173. Residues 366–369 (KEEL) carry the Prevents secretion from ER motif.

Belongs to the protein disulfide isomerase family.

Its subcellular location is the endoplasmic reticulum lumen. The catalysed reaction is Catalyzes the rearrangement of -S-S- bonds in proteins.. In Neurospora crassa (strain ATCC 24698 / 74-OR23-1A / CBS 708.71 / DSM 1257 / FGSC 987), this protein is Protein disulfide-isomerase erp38 (erp38).